Reading from the N-terminus, the 392-residue chain is MNVFNTASDEDIKKGLASDVYFERTISAIGDKCNDLRVAMEATVSGPLDTWINFTGLDEVLKLLEGLDVDLYAIPEGTILFPRDANGLPVPFIRVEGRYCDFGMYETAILGFICQASGISTKASKVRLAAGDSPFFSFGIRRMHPAISPMIDRSAYIGGADGVSGILGAKLIDQDPVGTMPHALSIMLGDEEAWKLTLENTKNGQKSVLLIDTYMDEKFAAIKIAEMFDKVDYIRLDTPSSRRGNFEALIREVRWELALRGRSDIKIMVSGGLDENTVKKLREAGAEAFGVGTSISSAKPFDFAMDIVEVNGKPETKRGKMSGRKNVLRCTSCHRIEVVPANVQEKTCICGGSMQNLLVKYLSHGKRTSEYPRPKEIRSRSMKELEYFKDIS.

Residues tyrosine 21, phenylalanine 138, and threonine 179 each contribute to the nicotinate site. Histidine 182 carries the phosphohistidine modification. Arginine 235 is a binding site for nicotinate. Serine 240, glycine 272, and threonine 293 together coordinate 5-phospho-alpha-D-ribose 1-diphosphate. Residues cysteine 330, cysteine 333, cysteine 348, and cysteine 350 each contribute to the Zn(2+) site.

It belongs to the NAPRTase family. Highly divergent. In terms of assembly, homodimer. Forms a trimer of dimers in the crystal. Transiently phosphorylated on a His residue during the reaction cycle. Phosphorylation strongly increases the affinity for substrates and increases the rate of nicotinate D-ribonucleotide production. Dephosphorylation regenerates the low-affinity form of the enzyme, leading to product release.

It catalyses the reaction nicotinate + 5-phospho-alpha-D-ribose 1-diphosphate + ATP + H2O = nicotinate beta-D-ribonucleotide + ADP + phosphate + diphosphate. It functions in the pathway cofactor biosynthesis; NAD(+) biosynthesis; nicotinate D-ribonucleotide from nicotinate: step 1/1. Catalyzes the synthesis of beta-nicotinate D-ribonucleotide from nicotinate and 5-phospho-D-ribose 1-phosphate at the expense of ATP. This chain is Putative nicotinate phosphoribosyltransferase, found in Thermoplasma acidophilum (strain ATCC 25905 / DSM 1728 / JCM 9062 / NBRC 15155 / AMRC-C165).